The sequence spans 664 residues: uncharacterized protein (664 aa).

The first 35 residues, 1–35 (MGVSVLTFHVSLFLKRILSIAFFLLSLSTLLRIVN), serve as a signal peptide directing secretion. N-linked (GlcNAc...) asparagine glycosylation is found at N101 and N138. Sel1-like repeat units follow at residues 141-178 (AFAN…KQGS) and 179-214 (LDAH…DHLF). N221, N300, and N371 each carry an N-linked (GlcNAc...) asparagine glycan. Sel1-like repeat units follow at residues 337 to 372 (AQSC…TKND), 373 to 409 (SNSY…MNEN), 410 to 441 (PHAL…TQKS), and 442 to 477 (VISY…EAIR). N-linked (GlcNAc...) asparagine glycosylation is found at N454 and N537. Sel1-like repeat units lie at residues 564-599 (IDAI…EQSS) and 601-636 (GMGL…SNQN).

This sequence belongs to the sel-1 family.

This is an uncharacterized protein from Schizosaccharomyces pombe (strain 972 / ATCC 24843) (Fission yeast).